A 1399-amino-acid chain; its full sequence is DNA-directed RNA polymerase subunit beta' (1399 aa).

Zn(2+) contacts are provided by Cys-71, Cys-73, Cys-86, and Cys-89. Mg(2+)-binding residues include Asp-462, Asp-464, and Asp-466. Zn(2+) contacts are provided by Cys-810, Cys-884, Cys-891, and Cys-894. The disordered stretch occupies residues 1379–1399; that stretch reads KQAAIVPSQPEPQPLALPPAE. Residues 1387-1399 show a composition bias toward pro residues; that stretch reads QPEPQPLALPPAE.

This sequence belongs to the RNA polymerase beta' chain family. As to quaternary structure, the RNAP catalytic core consists of 2 alpha, 1 beta, 1 beta' and 1 omega subunit. When a sigma factor is associated with the core the holoenzyme is formed, which can initiate transcription. It depends on Mg(2+) as a cofactor. The cofactor is Zn(2+).

The enzyme catalyses RNA(n) + a ribonucleoside 5'-triphosphate = RNA(n+1) + diphosphate. In terms of biological role, DNA-dependent RNA polymerase catalyzes the transcription of DNA into RNA using the four ribonucleoside triphosphates as substrates. This is DNA-directed RNA polymerase subunit beta' from Bradyrhizobium sp. (strain BTAi1 / ATCC BAA-1182).